The chain runs to 538 residues: Mevalonate kinase erg12 (538 aa).

The tract at residues 1–87 (MGNPRGRRTN…RNMSRKPSSP (87 aa)) is disordered. Over residues 9–29 (TNGSIKTSKGTQRGTVSNLLS) the composition is skewed to polar residues. Positions 57 to 69 (TTPSTTESTLKTT) are enriched in low complexity. ATP is bound by residues Lys99, Ser231, and 236–242 (GAGLGSS). Residues Ser242 and Glu287 each contribute to the Mg(2+) site. Asp298 (proton acceptor) is an active-site residue.

It belongs to the GHMP kinase family. Mevalonate kinase subfamily. In terms of assembly, homodimer. Mg(2+) is required as a cofactor.

Its subcellular location is the cytoplasm. It is found in the cytosol. The catalysed reaction is (R)-mevalonate + ATP = (R)-5-phosphomevalonate + ADP + H(+). It functions in the pathway isoprenoid biosynthesis; isopentenyl diphosphate biosynthesis via mevalonate pathway; isopentenyl diphosphate from (R)-mevalonate: step 1/3. Mevalonate kinase; part of the second module of ergosterol biosynthesis pathway that includes the middle steps of the pathway. Erg12 converts mevalonate into 5-phosphomevalonate. The second module is carried out in the vacuole and involves the formation of farnesyl diphosphate, which is also an important intermediate in the biosynthesis of ubiquinone, dolichol, heme and prenylated proteins. Activity by the mevalonate kinase erg12 (AFUA_4G07780) first converts mevalonate into 5-phosphomevalonate. 5-phosphomevalonate is then further converted to 5-diphosphomevalonate by the phosphomevalonate kinase erg8 (AFUA_5G10680). The diphosphomevalonate decarboxylase mvd1 (AFUA_4G07130) then produces isopentenyl diphosphate. The isopentenyl-diphosphate delta-isomerase idi1 (AFUA_6G11160) then catalyzes the 1,3-allylic rearrangement of the homoallylic substrate isopentenyl (IPP) to its highly electrophilic allylic isomer, dimethylallyl diphosphate (DMAPP). Finally the farnesyl diphosphate synthase erg20 (AFUA_5G02450) catalyzes the sequential condensation of isopentenyl pyrophosphate with dimethylallyl pyrophosphate, and then with the resultant geranylpyrophosphate to the ultimate product farnesyl pyrophosphate. The polypeptide is Mevalonate kinase erg12 (Aspergillus fumigatus (strain ATCC MYA-4609 / CBS 101355 / FGSC A1100 / Af293) (Neosartorya fumigata)).